Here is a 482-residue protein sequence, read N- to C-terminus: Tripartite motif-containing protein 10 (482 aa).

An RING-type zinc finger spans residues Cys16–Lys61. The segment at Glu95–Leu136 adopts a B box-type zinc-finger fold. Residues Cys100, His103, Cys122, and His128 each coordinate Zn(2+). One can recognise a B30.2/SPRY domain in the interval Arg293 to Ser482.

The protein belongs to the TRIM/RBCC family. Interacts with IFNAR1; this interaction prevents association of IFNAR1 with TYK2.

Its subcellular location is the cytoplasm. In terms of biological role, E3 ligase that plays an essential role in the differentiation and survival of terminal erythroid cells. May directly bind to PTEN and promote its ubiquitination, resulting in its proteasomal degradation and activation of hypertrophic signaling. In addition, plays a role in immune response regulation by repressing the phosphorylation of STAT1 and STAT2 in the interferon/JAK/STAT signaling pathway independent of its E3 ligase activity. Mechanistically, interacts with the intracellular domain of IFNAR1 and thereby inhibits the association of TYK2 and IFNAR1. The protein is Tripartite motif-containing protein 10 (TRIM10) of Sus scrofa (Pig).